A 564-amino-acid chain; its full sequence is Beta-N-acetylglucosaminidase/beta-glucosidase (564 aa).

The active-site Nucleophile is the aspartate 283.

It belongs to the glycosyl hydrolase 3 family.

The catalysed reaction is Hydrolysis of terminal non-reducing N-acetyl-D-hexosamine residues in N-acetyl-beta-D-hexosaminides.. The enzyme catalyses Hydrolysis of terminal, non-reducing beta-D-glucosyl residues with release of beta-D-glucose.. Functionally, catalyzes the cleavage of beta-N-acetyl-D-glucosaminides and beta-D-glucosides. Might be involved in the degradation of glucuronic acid-containing glycosaminoglycans such as hyaluronic acid. This is Beta-N-acetylglucosaminidase/beta-glucosidase (nag3) from Cellulomonas fimi.